A 189-amino-acid polypeptide reads, in one-letter code: Large ribosomal subunit protein uL5 (189 aa).

Belongs to the universal ribosomal protein uL5 family. Part of the 50S ribosomal subunit; part of the 5S rRNA/L5/L18/L25 subcomplex. Contacts the 5S rRNA and the P site tRNA. Forms a bridge to the 30S subunit in the 70S ribosome.

Functionally, this is one of the proteins that bind and probably mediate the attachment of the 5S RNA into the large ribosomal subunit, where it forms part of the central protuberance. In the 70S ribosome it contacts protein S13 of the 30S subunit (bridge B1b), connecting the 2 subunits; this bridge is implicated in subunit movement. Contacts the P site tRNA; the 5S rRNA and some of its associated proteins might help stabilize positioning of ribosome-bound tRNAs. The polypeptide is Large ribosomal subunit protein uL5 (Kineococcus radiotolerans (strain ATCC BAA-149 / DSM 14245 / SRS30216)).